Here is a 462-residue protein sequence, read N- to C-terminus: L-seryl-tRNA(Sec) selenium transferase (462 aa).

Lys292 is modified (N6-(pyridoxal phosphate)lysine).

The protein belongs to the SelA family. Pyridoxal 5'-phosphate serves as cofactor.

Its subcellular location is the cytoplasm. It carries out the reaction L-seryl-tRNA(Sec) + selenophosphate + H(+) = L-selenocysteinyl-tRNA(Sec) + phosphate. Its pathway is aminoacyl-tRNA biosynthesis; selenocysteinyl-tRNA(Sec) biosynthesis; selenocysteinyl-tRNA(Sec) from L-seryl-tRNA(Sec) (bacterial route): step 1/1. Functionally, converts seryl-tRNA(Sec) to selenocysteinyl-tRNA(Sec) required for selenoprotein biosynthesis. This chain is L-seryl-tRNA(Sec) selenium transferase, found in Geotalea uraniireducens (strain Rf4) (Geobacter uraniireducens).